We begin with the raw amino-acid sequence, 348 residues long: GMP reductase (348 aa).

An NADP(+)-binding site is contributed by 108–131 (ADFIKLRQILALSPSLKFICIDVA). Glycine 181 and glycine 183 together coordinate K(+). Residue cysteine 186 is the Thioimidate intermediate of the active site. 216-239 (IVSDGGCTMPGDVAKAFGGGADFV) serves as a coordination point for NADP(+).

This sequence belongs to the IMPDH/GMPR family. GuaC type 1 subfamily. In terms of assembly, homotetramer.

It carries out the reaction IMP + NH4(+) + NADP(+) = GMP + NADPH + 2 H(+). Its function is as follows. Catalyzes the irreversible NADPH-dependent deamination of GMP to IMP. It functions in the conversion of nucleobase, nucleoside and nucleotide derivatives of G to A nucleotides, and in maintaining the intracellular balance of A and G nucleotides. The chain is GMP reductase from Edwardsiella ictaluri (strain 93-146).